A 197-amino-acid chain; its full sequence is MSKSFYGYIRDAWKNPDETYVRDLRWERLQVWRKEGSVTRVERPTRIDRARSLGYKAKQGIVVARVKVRRGSMRKSRYIRGRRTQHTGKNKITVGKSIQRISEERAARKYPNMEVLNSYWVGEDGKQKWYEVILVDPSHPVIKSDKNLNWICGKAHSGRVFRGKTSAGRKGRGMQTRGTGTEKTRPSVRSNLNRSKK.

Residues 163-172 (GKTSAGRKGR) are compositionally biased toward basic residues. The disordered stretch occupies residues 163–197 (GKTSAGRKGRGMQTRGTGTEKTRPSVRSNLNRSKK). The span at 186-197 (PSVRSNLNRSKK) shows a compositional bias: polar residues.

Belongs to the eukaryotic ribosomal protein eL15 family.

The sequence is that of Large ribosomal subunit protein eL15 from Methanococcoides burtonii (strain DSM 6242 / NBRC 107633 / OCM 468 / ACE-M).